Consider the following 484-residue polypeptide: tRNA-2-methylthio-N(6)-dimethylallyladenosine synthase (484 aa).

The region spanning 36 to 153 (GKLYIKTHGC…LPELIRARRE (118 aa)) is the MTTase N-terminal domain. Positions 45, 82, 116, 190, 194, and 197 each coordinate [4Fe-4S] cluster. In terms of domain architecture, Radical SAM core spans 176–415 (RAEGPSAFVS…HINAHAASIS (240 aa)). In terms of domain architecture, TRAM spans 416–479 (QSMVGSVQRV…SNSLRGRIQL (64 aa)). The interval 428 to 450 (EGPSRRDPNELTGKSENMRPVNF) is disordered.

The protein belongs to the methylthiotransferase family. MiaB subfamily. In terms of assembly, monomer. It depends on [4Fe-4S] cluster as a cofactor.

It is found in the cytoplasm. The catalysed reaction is N(6)-dimethylallyladenosine(37) in tRNA + (sulfur carrier)-SH + AH2 + 2 S-adenosyl-L-methionine = 2-methylsulfanyl-N(6)-dimethylallyladenosine(37) in tRNA + (sulfur carrier)-H + 5'-deoxyadenosine + L-methionine + A + S-adenosyl-L-homocysteine + 2 H(+). Catalyzes the methylthiolation of N6-(dimethylallyl)adenosine (i(6)A), leading to the formation of 2-methylthio-N6-(dimethylallyl)adenosine (ms(2)i(6)A) at position 37 in tRNAs that read codons beginning with uridine. This Xanthomonas axonopodis pv. citri (strain 306) protein is tRNA-2-methylthio-N(6)-dimethylallyladenosine synthase.